The primary structure comprises 27 residues: VAPFPHGKLVTYKYIADVKAGVDPSLV.

As to quaternary structure, homodimer. In terms of tissue distribution, hemolymph.

The protein localises to the secreted. It localises to the extracellular space. In terms of biological role, unknown (it might play a role in lipid transport and/or storage protein metabolism during metamorphosis). The sequence is that of Larval-specific very high density lipoprotein from Apis mellifera (Honeybee).